Reading from the N-terminus, the 316-residue chain is Pantothenate kinase (316 aa).

Residue 95–102 participates in ATP binding; that stretch reads GSVAVGKS.

This sequence belongs to the prokaryotic pantothenate kinase family.

The protein localises to the cytoplasm. The catalysed reaction is (R)-pantothenate + ATP = (R)-4'-phosphopantothenate + ADP + H(+). The protein operates within cofactor biosynthesis; coenzyme A biosynthesis; CoA from (R)-pantothenate: step 1/5. The protein is Pantothenate kinase of Yersinia enterocolitica serotype O:8 / biotype 1B (strain NCTC 13174 / 8081).